The sequence spans 254 residues: 3-beta-hydroxysteroid dehydrogenase (254 aa).

NAD(+) contacts are provided by residues 12 to 40 and Asp-61; that span reads VTGGASGVGLEVVKLLLGEGAKVAFSDIN. A substrate-binding site is contributed by Ser-139. Residue Tyr-152 is the Proton acceptor of the active site. Lys-156 contacts NAD(+).

Belongs to the short-chain dehydrogenases/reductases (SDR) family. In terms of assembly, homotetramer.

It carries out the reaction testosterone + NAD(+) = androst-4-ene-3,17-dione + NADH + H(+). The enzyme catalyses testosterone + NADP(+) = androst-4-ene-3,17-dione + NADPH + H(+). In Comamonas testosteroni (Pseudomonas testosteroni), this protein is 3-beta-hydroxysteroid dehydrogenase.